Consider the following 88-residue polypeptide: MSRSLRKGPFVDHSLIKKVRAMNLLEKKTPIKTWSRRSMITPEMIGHTFEVHNGKKFLTVFVSETMVGHKLGEFSPTRIFKSHPVKKG.

This sequence belongs to the universal ribosomal protein uS19 family.

In terms of biological role, protein S19 forms a complex with S13 that binds strongly to the 16S ribosomal RNA. The protein is Small ribosomal subunit protein uS19 of Chlamydia abortus (strain DSM 27085 / S26/3) (Chlamydophila abortus).